The following is a 356-amino-acid chain: Photosystem II protein D1 (356 aa).

The next 3 helical transmembrane spans lie at tyrosine 29–threonine 46, histidine 118–leucine 133, and tryptophan 142–alanine 156. Chlorophyll a is bound at residue histidine 118. Position 126 (tyrosine 126) interacts with pheophytin a. Residues aspartate 170 and glutamate 189 each coordinate [CaMn4O5] cluster. The helical transmembrane segment at phenylalanine 197 to leucine 218 threads the bilayer. Histidine 198 lines the chlorophyll a pocket. Residues histidine 215 and serine 264–phenylalanine 265 contribute to the a quinone site. Residue histidine 215 coordinates Fe cation. A Fe cation-binding site is contributed by histidine 272. A helical membrane pass occupies residues phenylalanine 274–methionine 288. 4 residues coordinate [CaMn4O5] cluster: histidine 332, glutamate 333, aspartate 342, and alanine 344. A propeptide spanning residues serine 345 to glycine 356 is cleaved from the precursor.

The protein belongs to the reaction center PufL/M/PsbA/D family. In terms of assembly, PSII is composed of 1 copy each of membrane proteins PsbA, PsbB, PsbC, PsbD, PsbE, PsbF, PsbH, PsbI, PsbJ, PsbK, PsbL, PsbM, PsbT, PsbX, PsbY, PsbZ, Psb30/Ycf12, peripheral proteins PsbO, CyanoQ (PsbQ), PsbU, PsbV and a large number of cofactors. It forms dimeric complexes. The D1/D2 heterodimer binds P680, chlorophylls that are the primary electron donor of PSII, and subsequent electron acceptors. It shares a non-heme iron and each subunit binds pheophytin, quinone, additional chlorophylls, carotenoids and lipids. D1 provides most of the ligands for the Mn4-Ca-O5 cluster of the oxygen-evolving complex (OEC). There is also a Cl(-1) ion associated with D1 and D2, which is required for oxygen evolution. The PSII complex binds additional chlorophylls, carotenoids and specific lipids. serves as cofactor. Post-translationally, tyr-161 forms a radical intermediate that is referred to as redox-active TyrZ, YZ or Y-Z. C-terminally processed by CtpA; processing is essential to allow assembly of the oxygen-evolving complex and thus photosynthetic growth.

It is found in the cellular thylakoid membrane. It catalyses the reaction 2 a plastoquinone + 4 hnu + 2 H2O = 2 a plastoquinol + O2. Photosystem II (PSII) is a light-driven water:plastoquinone oxidoreductase that uses light energy to abstract electrons from H(2)O, generating O(2) and a proton gradient subsequently used for ATP formation. It consists of a core antenna complex that captures photons, and an electron transfer chain that converts photonic excitation into a charge separation. The D1/D2 (PsbA/PsbD) reaction center heterodimer binds P680, the primary electron donor of PSII as well as several subsequent electron acceptors. The chain is Photosystem II protein D1 from Crocosphaera subtropica (strain ATCC 51142 / BH68) (Cyanothece sp. (strain ATCC 51142)).